A 182-amino-acid chain; its full sequence is Adenine phosphoribosyltransferase (182 aa).

This sequence belongs to the purine/pyrimidine phosphoribosyltransferase family. In terms of assembly, homodimer.

Its subcellular location is the cytoplasm. The enzyme catalyses AMP + diphosphate = 5-phospho-alpha-D-ribose 1-diphosphate + adenine. It participates in purine metabolism; AMP biosynthesis via salvage pathway; AMP from adenine: step 1/1. In terms of biological role, catalyzes a salvage reaction resulting in the formation of AMP, that is energically less costly than de novo synthesis. This chain is Adenine phosphoribosyltransferase, found in Shewanella frigidimarina (strain NCIMB 400).